A 913-amino-acid polypeptide reads, in one-letter code: DNA polymerase (913 aa).

The segment at 182-401 (PLIIASWDIE…AYARKDTDLP (220 aa)) is contains conserved residues essential for 3' -&gt; 5' exonuclease activities.

This sequence belongs to the DNA polymerase type-B family.

It carries out the reaction DNA(n) + a 2'-deoxyribonucleoside 5'-triphosphate = DNA(n+1) + diphosphate. In addition to polymerase activity, this DNA polymerase potentially exhibits 3' to 5' exonuclease activity. The chain is DNA polymerase (DPO) from Chlorella (PBCV-NY2A).